We begin with the raw amino-acid sequence, 249 residues long: Exosome complex component Rrp41 (249 aa).

Belongs to the RNase PH family. Rrp41 subfamily. In terms of assembly, component of the archaeal exosome complex. Forms a hexameric ring-like arrangement composed of 3 Rrp41-Rrp42 heterodimers. The hexameric ring associates with a trimer of Rrp4 and/or Csl4 subunits.

It localises to the cytoplasm. Its function is as follows. Catalytic component of the exosome, which is a complex involved in RNA degradation. Has 3'-&gt;5' exoribonuclease activity. Can also synthesize heteromeric RNA-tails. In Thermococcus gammatolerans (strain DSM 15229 / JCM 11827 / EJ3), this protein is Exosome complex component Rrp41.